The sequence spans 117 residues: Large ribosomal subunit protein eL34 (117 aa).

Phosphoserine is present on Ser12. 2 positions are modified to N6-acetyllysine: Lys36 and Lys43. A Glycyl lysine isopeptide (Lys-Gly) (interchain with G-Cter in SUMO2) cross-link involves residue Lys108.

The protein belongs to the eukaryotic ribosomal protein eL34 family. Component of the large ribosomal subunit.

The protein localises to the cytoplasm. Its subcellular location is the cytosol. It localises to the endoplasmic reticulum. Functionally, component of the large ribosomal subunit. The ribosome is a large ribonucleoprotein complex responsible for the synthesis of proteins in the cell. This Sus scrofa (Pig) protein is Large ribosomal subunit protein eL34 (RPL34).